We begin with the raw amino-acid sequence, 232 residues long: Ion-translocating oxidoreductase complex subunit E (232 aa).

A run of 6 helical transmembrane segments spans residues 18–38 (GLVQLLGLCPLLAVTATLTNA), 39–59 (LGLGVATMLVLIGSNILVSLV), 69–89 (IPVFVMIIAALVTAVQLLINA), 93–113 (GLYLSLGIFLPLIVTNCIIIG), 127–147 (AAFDGLMMGLGFTLVLAVLGA), and 182–202 (PFLLAMLPPGAFIVMGLLIAL).

Belongs to the NqrDE/RnfAE family. In terms of assembly, the complex is composed of six subunits: RnfA, RnfB, RnfC, RnfD, RnfE and RnfG.

It localises to the cell inner membrane. In terms of biological role, part of a membrane-bound complex that couples electron transfer with translocation of ions across the membrane. This Shewanella sp. (strain MR-4) protein is Ion-translocating oxidoreductase complex subunit E.